Reading from the N-terminus, the 186-residue chain is Pyridoxal 5'-phosphate synthase subunit PdxT (186 aa).

46 to 48 (GES) is an L-glutamine binding site. Cys75 (nucleophile) is an active-site residue. Residues Arg101 and 127-128 (IR) contribute to the L-glutamine site. Residues His164 and Glu166 each act as charge relay system in the active site.

The protein belongs to the glutaminase PdxT/SNO family. In the presence of PdxS, forms a dodecamer of heterodimers. Only shows activity in the heterodimer.

The catalysed reaction is aldehydo-D-ribose 5-phosphate + D-glyceraldehyde 3-phosphate + L-glutamine = pyridoxal 5'-phosphate + L-glutamate + phosphate + 3 H2O + H(+). The enzyme catalyses L-glutamine + H2O = L-glutamate + NH4(+). It functions in the pathway cofactor biosynthesis; pyridoxal 5'-phosphate biosynthesis. Catalyzes the hydrolysis of glutamine to glutamate and ammonia as part of the biosynthesis of pyridoxal 5'-phosphate. The resulting ammonia molecule is channeled to the active site of PdxS. The sequence is that of Pyridoxal 5'-phosphate synthase subunit PdxT from Methanococcus aeolicus (strain ATCC BAA-1280 / DSM 17508 / OCM 812 / Nankai-3).